A 501-amino-acid chain; its full sequence is Aspartyl/glutamyl-tRNA(Asn/Gln) amidotransferase subunit B (501 aa).

Residues 276-299 (HYQEADGSTSKGRPKETAEDYRYF) form a disordered region. Over residues 288–299 (RPKETAEDYRYF) the composition is skewed to basic and acidic residues.

It belongs to the GatB/GatE family. GatB subfamily. As to quaternary structure, heterotrimer of A, B and C subunits.

The catalysed reaction is L-glutamyl-tRNA(Gln) + L-glutamine + ATP + H2O = L-glutaminyl-tRNA(Gln) + L-glutamate + ADP + phosphate + H(+). It catalyses the reaction L-aspartyl-tRNA(Asn) + L-glutamine + ATP + H2O = L-asparaginyl-tRNA(Asn) + L-glutamate + ADP + phosphate + 2 H(+). Allows the formation of correctly charged Asn-tRNA(Asn) or Gln-tRNA(Gln) through the transamidation of misacylated Asp-tRNA(Asn) or Glu-tRNA(Gln) in organisms which lack either or both of asparaginyl-tRNA or glutaminyl-tRNA synthetases. The reaction takes place in the presence of glutamine and ATP through an activated phospho-Asp-tRNA(Asn) or phospho-Glu-tRNA(Gln). The sequence is that of Aspartyl/glutamyl-tRNA(Asn/Gln) amidotransferase subunit B from Corynebacterium glutamicum (strain R).